A 281-amino-acid polypeptide reads, in one-letter code: Bifunctional protein FolD (281 aa).

Residues 165–167 (GRG), T192, and V233 contribute to the NADP(+) site.

This sequence belongs to the tetrahydrofolate dehydrogenase/cyclohydrolase family. As to quaternary structure, homodimer.

The catalysed reaction is (6R)-5,10-methylene-5,6,7,8-tetrahydrofolate + NADP(+) = (6R)-5,10-methenyltetrahydrofolate + NADPH. The enzyme catalyses (6R)-5,10-methenyltetrahydrofolate + H2O = (6R)-10-formyltetrahydrofolate + H(+). It participates in one-carbon metabolism; tetrahydrofolate interconversion. In terms of biological role, catalyzes the oxidation of 5,10-methylenetetrahydrofolate to 5,10-methenyltetrahydrofolate and then the hydrolysis of 5,10-methenyltetrahydrofolate to 10-formyltetrahydrofolate. This is Bifunctional protein FolD from Corynebacterium diphtheriae (strain ATCC 700971 / NCTC 13129 / Biotype gravis).